Consider the following 809-residue polypeptide: Zygotic DNA replication licensing factor mcm3 (809 aa).

The region spanning Ile-297–Leu-504 is the MCM domain. Gly-347 to Ser-354 is a binding site for ATP. The Arginine finger signature appears at Ser-479–Asp-482. Residues Lys-664 to Ser-741 form a disordered region. Basic and acidic residues predominate over residues Ala-696–Tyr-705.

It belongs to the MCM family. Component of the mcm2-7 complex (RLF-M). The complex forms a toroidal hexameric ring with the proposed subunit order mcm2-mcm6-mcm4-mcm7-mcm3-mcm5. Component of the CMG helicase complex, composed of the mcm2-7 complex, the GINS complex and cdc45.

It is found in the nucleus. Its subcellular location is the chromosome. The catalysed reaction is ATP + H2O = ADP + phosphate + H(+). Functionally, acts as a component of the MCM2-7 complex (MCM complex) which is the putative replicative helicase essential for 'once per cell cycle' DNA replication initiation and elongation in eukaryotic cells. The active ATPase sites in the MCM2-7 ring are formed through the interaction surfaces of two neighboring subunits such that a critical structure of a conserved arginine finger motif is provided in trans relative to the ATP-binding site of the Walker A box of the adjacent subunit. The six ATPase active sites, however, are likely to contribute differentially to the complex helicase activity. The existence of maternal and zygotic forms of mcm3 and mcm6 suggests that specific forms of mcm2-7 complexes may be used during different stages of development. This Xenopus tropicalis (Western clawed frog) protein is Zygotic DNA replication licensing factor mcm3 (zmcm3).